We begin with the raw amino-acid sequence, 547 residues long: Probable protein kinase UbiB (547 aa).

In terms of domain architecture, Protein kinase spans 121–501 (EFSPDPMASA…QLRSERRWRR (381 aa)). Residues 127–135 (MASASVAQV) and K149 each bind ATP. The active-site Proton acceptor is the D284. 2 helical membrane-spanning segments follow: residues 502 to 522 (GFIA…HAGQ) and 523 to 543 (WLAD…GVML).

Belongs to the ABC1 family. UbiB subfamily.

It localises to the cell inner membrane. Its pathway is cofactor biosynthesis; ubiquinone biosynthesis [regulation]. Functionally, is probably a protein kinase regulator of UbiI activity which is involved in aerobic coenzyme Q (ubiquinone) biosynthesis. This chain is Probable protein kinase UbiB, found in Marinobacter nauticus (strain ATCC 700491 / DSM 11845 / VT8) (Marinobacter aquaeolei).